Reading from the N-terminus, the 555-residue chain is MDKRHDPSRRIIAPHGTQLSCKSWLTEAPMRMLMNNLHPDVAERPEDLVVYGGIGRAARDWDCYDKIIEVLQRLEDDETLLVQSGKPVGVFRTHADAPRVLIANSNLVPHWANWEHFNELDKLGLAMYGQMTAGSWIYIGTQGIVQGTYETFVSVAKQHFEGISKGKWILTGGLGGMGGAQTLAGTMAGFSVLACEVDETRIDFRLRTRYVDKKATSLDEALAMIEAANQAGKPVSVGLLANAADVFAELVKRGVTPDVVTDQTSAHDPLNGYLPQGWTMAEAAAMRKTDEAGVVKAAKASMAVQVQAMLDLQTAGAATLDYGNNIRQMAFEMGVENAFDFPGFVPAYIRPLFCEGIGPFRWVALSGDPEDIYKTDAKVKELIPDNPHLHNWLDMARERIAFQGLPARICWVGLKDRARLALAFNEMVKNGELSAPVVIGRDHLDSGSVASPNRETESMLDGSDAVSDWPLLNALLNTASGATWVSLHHGGGVGMGFSQHSGVVIVCDGTDAAAKRVGRVLWNDPATGVMRHADAGYEIAKNCAKEQGLDLPMQE.

Residues 52-53 (GG), Q130, 176-178 (GMG), E196, R201, 242-243 (NA), 263-267 (QTSAH), 273-274 (YL), and Y322 contribute to the NAD(+) site. C410 is an active-site residue. G492 contacts NAD(+).

Belongs to the urocanase family. NAD(+) is required as a cofactor.

The protein resides in the cytoplasm. The enzyme catalyses 4-imidazolone-5-propanoate = trans-urocanate + H2O. Its pathway is amino-acid degradation; L-histidine degradation into L-glutamate; N-formimidoyl-L-glutamate from L-histidine: step 2/3. Catalyzes the conversion of urocanate to 4-imidazolone-5-propionate. The polypeptide is Urocanate hydratase (Shewanella baltica (strain OS185)).